A 189-amino-acid polypeptide reads, in one-letter code: UPF0301 protein PputGB1_5045 (189 aa).

It belongs to the UPF0301 (AlgH) family.

In Pseudomonas putida (strain GB-1), this protein is UPF0301 protein PputGB1_5045.